A 227-amino-acid chain; its full sequence is Cytochrome c oxidase subunit 2 (227 aa).

Residues 1–14 (MAHAVQYGFQDAAA) lie on the Mitochondrial intermembrane side of the membrane. Residues 15–45 (PIMEELLYFHDHTLMIVFMISSLVLYIISLM) traverse the membrane as a helical segment. Topologically, residues 46–59 (LSTELTHTSTMDAQ) are mitochondrial matrix. The helical transmembrane segment at 60–87 (EVETVWTILPAVILILIALPSLRILYMM) threads the bilayer. Over 88–227 (DEIETPSLTL…YFEEWLLKTL (140 aa)) the chain is Mitochondrial intermembrane. His-161, Cys-196, Glu-198, Cys-200, His-204, and Met-207 together coordinate Cu cation. Glu-198 provides a ligand contact to Mg(2+). Tyr-218 carries the phosphotyrosine modification.

Belongs to the cytochrome c oxidase subunit 2 family. As to quaternary structure, component of the cytochrome c oxidase (complex IV, CIV), a multisubunit enzyme composed of 14 subunits. The complex is composed of a catalytic core of 3 subunits MT-CO1, MT-CO2 and MT-CO3, encoded in the mitochondrial DNA, and 11 supernumerary subunits COX4I, COX5A, COX5B, COX6A, COX6B, COX6C, COX7A, COX7B, COX7C, COX8 and NDUFA4, which are encoded in the nuclear genome. The complex exists as a monomer or a dimer and forms supercomplexes (SCs) in the inner mitochondrial membrane with NADH-ubiquinone oxidoreductase (complex I, CI) and ubiquinol-cytochrome c oxidoreductase (cytochrome b-c1 complex, complex III, CIII), resulting in different assemblies (supercomplex SCI(1)III(2)IV(1) and megacomplex MCI(2)III(2)IV(2)). Found in a complex with TMEM177, COA6, COX18, COX20, SCO1 and SCO2. Interacts with TMEM177 in a COX20-dependent manner. Interacts with COX20. Interacts with COX16. Cu cation is required as a cofactor.

The protein localises to the mitochondrion inner membrane. The catalysed reaction is 4 Fe(II)-[cytochrome c] + O2 + 8 H(+)(in) = 4 Fe(III)-[cytochrome c] + 2 H2O + 4 H(+)(out). Its function is as follows. Component of the cytochrome c oxidase, the last enzyme in the mitochondrial electron transport chain which drives oxidative phosphorylation. The respiratory chain contains 3 multisubunit complexes succinate dehydrogenase (complex II, CII), ubiquinol-cytochrome c oxidoreductase (cytochrome b-c1 complex, complex III, CIII) and cytochrome c oxidase (complex IV, CIV), that cooperate to transfer electrons derived from NADH and succinate to molecular oxygen, creating an electrochemical gradient over the inner membrane that drives transmembrane transport and the ATP synthase. Cytochrome c oxidase is the component of the respiratory chain that catalyzes the reduction of oxygen to water. Electrons originating from reduced cytochrome c in the intermembrane space (IMS) are transferred via the dinuclear copper A center (CU(A)) of subunit 2 and heme A of subunit 1 to the active site in subunit 1, a binuclear center (BNC) formed by heme A3 and copper B (CU(B)). The BNC reduces molecular oxygen to 2 water molecules using 4 electrons from cytochrome c in the IMS and 4 protons from the mitochondrial matrix. The chain is Cytochrome c oxidase subunit 2 (MT-CO2) from Galago senegalensis (Northern lesser bushbaby).